A 319-amino-acid chain; its full sequence is Malate dehydrogenase (319 aa).

NAD(+) is bound by residues 10–15 (GSGNIG) and Asp-34. Substrate contacts are provided by Arg-83 and Arg-89. NAD(+) is bound by residues Asn-96 and 119–121 (ITN). Residues Asn-121 and Arg-152 each contribute to the substrate site. Residue His-176 is the Proton acceptor of the active site.

Belongs to the LDH/MDH superfamily. MDH type 3 family.

It carries out the reaction (S)-malate + NAD(+) = oxaloacetate + NADH + H(+). Its function is as follows. Catalyzes the reversible oxidation of malate to oxaloacetate. The sequence is that of Malate dehydrogenase from Paramagnetospirillum magneticum (strain ATCC 700264 / AMB-1) (Magnetospirillum magneticum).